Here is a 254-residue protein sequence, read N- to C-terminus: Vesicle transport protein USE1 (254 aa).

Over methionine 1–lysine 228 the chain is Cytoplasmic. The chain crosses the membrane as a helical; Anchor for type IV membrane protein span at residues valine 229–phenylalanine 249. Topologically, residues lysine 250 to threonine 254 are lumenal.

Belongs to the USE1 family.

It is found in the endoplasmic reticulum membrane. In terms of biological role, SNARE that may be involved in targeting and fusion of Golgi-derived retrograde transport vesicles with the ER. The polypeptide is Vesicle transport protein USE1 (Caenorhabditis elegans).